The sequence spans 229 residues: Triosephosphate isomerase (229 aa).

Position 16 to 18 (16 to 18) interacts with substrate; the sequence is NFK. Residue histidine 100 is the Electrophile of the active site. Catalysis depends on glutamate 148, which acts as the Proton acceptor. Residues isoleucine 153, glycine 188, and 209–210 contribute to the substrate site; that span reads AS.

It belongs to the triosephosphate isomerase family. In terms of assembly, homotetramer; dimer of dimers.

It is found in the cytoplasm. It catalyses the reaction D-glyceraldehyde 3-phosphate = dihydroxyacetone phosphate. It functions in the pathway carbohydrate biosynthesis; gluconeogenesis. The protein operates within carbohydrate degradation; glycolysis; D-glyceraldehyde 3-phosphate from glycerone phosphate: step 1/1. Involved in the gluconeogenesis. Catalyzes stereospecifically the conversion of dihydroxyacetone phosphate (DHAP) to D-glyceraldehyde-3-phosphate (G3P). The chain is Triosephosphate isomerase from Methanothermobacter thermautotrophicus (strain ATCC 29096 / DSM 1053 / JCM 10044 / NBRC 100330 / Delta H) (Methanobacterium thermoautotrophicum).